Here is a 298-residue protein sequence, read N- to C-terminus: Putative ankyrin repeat-containing protein TP_0502 (298 aa).

ANK repeat units lie at residues 143 to 172 (CFEE…SAAL), 176 to 205 (RGTP…PVDQ), 210 to 239 (RAYS…DPNV), and 243 to 272 (NGQT…NPYL).

This chain is Putative ankyrin repeat-containing protein TP_0502, found in Treponema pallidum (strain Nichols).